We begin with the raw amino-acid sequence, 507 residues long: Maturase K (507 aa).

Belongs to the intron maturase 2 family. MatK subfamily.

The protein localises to the plastid. Its subcellular location is the chloroplast. Functionally, usually encoded in the trnK tRNA gene intron. Probably assists in splicing its own and other chloroplast group II introns. This chain is Maturase K, found in Euryale ferox (Gorgon plant).